The sequence spans 119 residues: gSG7 salivary protein (119 aa).

2 disulfide bridges follow: cysteine 58–cysteine 113 and cysteine 81–cysteine 91.

It localises to the secreted. Its activity is regulated as follows. The activity is increased in the presence of host properdin (CFP). Functionally, salivary protein that inhibits the alternative pathway of complement system activation in the host while having no inhibitory effect on the classical pathway. Inhibits activity of activated host C3-convertase complex C3bBb (C3-CFB). Enhances accumulation of C3bBb on immobilized properdin. This chain is gSG7 salivary protein, found in Anopheles freeborni (Western malaria mosquito).